A 530-amino-acid chain; its full sequence is UDP-glucuronosyltransferase 2B15 (530 aa).

The first 23 residues, 1 to 23, serve as a signal peptide directing secretion; sequence MSGKWISALLLLQISFCFKSGNC. An N-linked (GlcNAc...) asparagine glycan is attached at Asn316. Residues 494–510 form a helical membrane-spanning segment; that stretch reads VIGFLLSCVAVTVVLAL.

This sequence belongs to the UDP-glycosyltransferase family. N-glycosylated. As to expression, liver. Lower levels seen in the kidney and testis.

The protein localises to the endoplasmic reticulum membrane. The enzyme catalyses glucuronate acceptor + UDP-alpha-D-glucuronate = acceptor beta-D-glucuronoside + UDP + H(+). It catalyses the reaction 17alpha-estradiol + UDP-alpha-D-glucuronate = 17alpha-estradiol 3-O-(beta-D-glucuronate) + UDP + H(+). It carries out the reaction 16alpha,17alpha-estriol + UDP-alpha-D-glucuronate = 16alpha,17alpha-estriol 3-O-(beta-D-glucuronate) + UDP + H(+). The catalysed reaction is 17beta-hydroxy-5alpha-androstan-3-one + UDP-alpha-D-glucuronate = 5alpha-dihydrotestosterone 17-O-(beta-D-glucuronate) + UDP + H(+). In terms of biological role, UDP-glucuronosyltransferase (UGT) that catalyzes phase II biotransformation reactions in which lipophilic substrates are conjugated with glucuronic acid to increase the metabolite's water solubility, thereby facilitating excretion into either the urine or bile. Essential for the elimination and detoxification of drugs, xenobiotics and endogenous compounds. Catalyzes the glucuronidation of endogenous steroid hormones such as androgens (testosterone, androsterone) and estrogens (estradiol, epiestradiol, estriol, catechol estrogens). Displays glucuronidation activity toward several classes of xenoblotic substrates, including phenolic compounds (eugenol, 4-nitrophenol, 4-hydroxybiphenyl) and phenylpropanoids (naringenin, coumarins). Catalyzes the glucuronidation of monoterpenoid alcohols such as borneol, menthol and isomenthol, a class of natural compounds used in essential oils. The protein is UDP-glucuronosyltransferase 2B15 of Rattus norvegicus (Rat).